The following is a 713-amino-acid chain: Probable arginine--tRNA ligase, cytoplasmic (713 aa).

The segment at 74–113 is disordered; the sequence is KNKKNGVKATSTSSPSSSTSAPAEKKAKKDGKTGGAPPKQ. Over residues 81–95 the composition is skewed to low complexity; that stretch reads KATSTSSPSSSTSAP. Basic and acidic residues predominate over residues 96 to 105; the sequence is AEKKAKKDGK. Residues 252–254, His263, Tyr438, Asp442, and Gln466 each bind L-arginine; that span reads SPN. The 'HIGH' region motif lies at 252–263; the sequence is SPNIAKEMHVGH. The segment at 583-597 is interaction with tRNA; the sequence is NTAVYLLYAYTRIQS.

It belongs to the class-I aminoacyl-tRNA synthetase family.

The protein localises to the cytoplasm. Its subcellular location is the cytosol. It catalyses the reaction tRNA(Arg) + L-arginine + ATP = L-arginyl-tRNA(Arg) + AMP + diphosphate. Forms part of a macromolecular complex that catalyzes the attachment of specific amino acids to cognate tRNAs during protein synthesis. This is Probable arginine--tRNA ligase, cytoplasmic from Caenorhabditis elegans.